A 454-amino-acid chain; its full sequence is Argininosuccinate synthase (454 aa).

ATP contacts are provided by residues 17–25 and alanine 43; that span reads AFSGGLDTS. Tyrosine 99 provides a ligand contact to L-citrulline. ATP is bound by residues glycine 129 and threonine 131. L-aspartate contacts are provided by threonine 131, asparagine 135, and aspartate 136. Asparagine 135 is a binding site for L-citrulline. Aspartate 136 is an ATP binding site. L-citrulline is bound by residues arginine 139 and serine 192. Aspartate 194 is an ATP binding site. The L-citrulline site is built by threonine 201, glutamate 203, and glutamate 280.

Belongs to the argininosuccinate synthase family. Type 2 subfamily. As to quaternary structure, homotetramer.

The protein resides in the cytoplasm. It carries out the reaction L-citrulline + L-aspartate + ATP = 2-(N(omega)-L-arginino)succinate + AMP + diphosphate + H(+). Its pathway is amino-acid biosynthesis; L-arginine biosynthesis; L-arginine from L-ornithine and carbamoyl phosphate: step 2/3. This is Argininosuccinate synthase from Yersinia enterocolitica serotype O:8 / biotype 1B (strain NCTC 13174 / 8081).